Reading from the N-terminus, the 459-residue chain is MHSPPRDQAAIMLWKLVENVKYEDIYEDRHDGVPSHSSRLSQLGSVSQGPYSSAPPLSHTPSSDFQPPYFPPPYQPLPYHQSQDPYSHVNDPYSLNPLHQPQQHPWGQRQRQEVGSEAGSLLPQPRAALPQLSGLDPRRDYHSVRRPDVLLHSAHHGLDAGMGDSLSLHGLGHPGMEDVQSVEDANNSGMNLLDQSVIKKVPVPPKSVTSLMMNKDGFLGGMSVNTGEVFCSVPGRLSLLSSTSKYKVTVGEVQRRLSPPECLNASLLGGVLRRAKSKNGGRSLRERLEKIGLNLPAGRRKAANVTLLTSLVEGEAVHLARDFGYICETEFPAKAVSEYLNRQHTDPSDLHSRKNMLLATKQLCKEFTDLLAQDRTPIGNSRPSPILEPGIQSCLTHFSLITHGFGAPAICAALTALQNYLTEALKGMDKMFLNNTTNRHTSGEGPGSKTGDKEEKHRK.

Residue Lys-21 forms a Glycyl lysine isopeptide (Lys-Gly) (interchain with G-Cter in SUMO) linkage. The interval 30–139 (HDGVPSHSSR…PQLSGLDPRR (110 aa)) is disordered. Polar residues predominate over residues 35–51 (SHSSRLSQLGSVSQGPY). Positions 121–132 (LLPQPRAALPQL) are enriched in low complexity. Ser-258 carries the phosphoserine; by PKA modification. The H-S-H (helix-span-helix), dimerization stretch occupies residues 299-429 (RRKAANVTLL…YLTEALKGMD (131 aa)). Residues 435–459 (NTTNRHTSGEGPGSKTGDKEEKHRK) form a disordered region. Residues 450 to 459 (TGDKEEKHRK) show a composition bias toward basic and acidic residues.

It belongs to the AP-2 family. Binds DNA as a dimer. Can form homodimers or heterodimers with other AP-2 family members. Interacts with CITED4. Interacts with UBE2I. Interacts with KCTD1; this interaction represses transcription activation. Interacts with CITED2 (via C-terminus); the interaction stimulates TFAP2B-transcriptional activity. In terms of processing, sumoylated. Sumoylated on Lys-21; which inhibits transcriptional activity. In terms of tissue distribution, localizes to neurons in areas of the cerebral cortex, cerebellum and hypothalamus (at protein level).

It localises to the nucleus. Sequence-specific DNA-binding protein that interacts with inducible viral and cellular enhancer elements to regulate transcription of selected genes. AP-2 factors bind to the consensus sequence 5'-GCCNNNGGC-3' and activate genes involved in a large spectrum of important biological functions including proper eye, face, body wall, limb and neural tube development. They also suppress a number of genes including MCAM/MUC18, C/EBP alpha and MYC. AP-2-beta appears to be required for normal face and limb development and for proper terminal differentiation and function of renal tubular epithelia. In Mus musculus (Mouse), this protein is Transcription factor AP-2-beta (Tfap2b).